The chain runs to 177 residues: Large ribosomal subunit protein uL6 (177 aa).

The protein belongs to the universal ribosomal protein uL6 family. Part of the 50S ribosomal subunit.

Its function is as follows. This protein binds to the 23S rRNA, and is important in its secondary structure. It is located near the subunit interface in the base of the L7/L12 stalk, and near the tRNA binding site of the peptidyltransferase center. The polypeptide is Large ribosomal subunit protein uL6 (Pseudomonas paraeruginosa (strain DSM 24068 / PA7) (Pseudomonas aeruginosa (strain PA7))).